We begin with the raw amino-acid sequence, 533 residues long: Calcineurin-interacting protein 3 (533 aa).

Disordered regions lie at residues 1–30 (MRSL…NMDI), 53–85 (PRKQ…YTKR), and 359–404 (MDMS…LTLP). Residues 61–85 (KRAEPVSEEHRKKESSKNSREYTKR) are compositionally biased toward basic and acidic residues. The segment covering 359 to 372 (MDMSQTLSPEQTLS) has biased composition (polar residues). Over residues 373–384 (PREKLQVQDRKI) the composition is skewed to basic and acidic residues.

Its subcellular location is the nucleus. The chain is Calcineurin-interacting protein 3 from Caenorhabditis elegans.